The primary structure comprises 450 residues: Na(+)/H(+) antiporter NhaA 2 (450 aa).

The next 12 helical transmembrane spans lie at 43–63 (VGGAVLLVASAVALVWANSPW), 86–106 (LTLGTWAADGLLAVFFLVVGL), 124–144 (ALPMAAAVGGMVVPALIFVAV), 155–175 (GWAIPTATDIAFAVAVLAVIS), 185–205 (FLLTLAVVDDLLAVTVIAVFY), 208–228 (EINLTALGLSIVPLALFALCV), 234–254 (SWWLLLPLGVATWVLVHESGV), 258–278 (VAGVLLGFTVPVLRSVAAGGP), 299–319 (VAVPVFAFFAAGVAIGGVSGL), 326–346 (PITLGIILGLVVGKPVGIFLT), 364–384 (WIDVFGVALLAGIGFTVSLLI), and 398–418 (FVKVGVLTGSLVAALIAAVLL).

It belongs to the NhaA Na(+)/H(+) (TC 2.A.33) antiporter family.

The protein resides in the cell membrane. The catalysed reaction is Na(+)(in) + 2 H(+)(out) = Na(+)(out) + 2 H(+)(in). In terms of biological role, na(+)/H(+) antiporter that extrudes sodium in exchange for external protons. In Mycobacterium sp. (strain JLS), this protein is Na(+)/H(+) antiporter NhaA 2.